Here is a 427-residue protein sequence, read N- to C-terminus: 3-phosphoshikimate 1-carboxyvinyltransferase (427 aa).

3 residues coordinate 3-phosphoshikimate: lysine 22, serine 23, and arginine 27. Residue lysine 22 participates in phosphoenolpyruvate binding. Residues glycine 96 and arginine 124 each contribute to the phosphoenolpyruvate site. 7 residues coordinate 3-phosphoshikimate: serine 169, serine 170, glutamine 171, serine 197, aspartate 313, asparagine 336, and lysine 340. Residue glutamine 171 coordinates phosphoenolpyruvate. Aspartate 313 serves as the catalytic Proton acceptor. The phosphoenolpyruvate site is built by arginine 344, arginine 386, and lysine 411.

The protein belongs to the EPSP synthase family. In terms of assembly, monomer.

It localises to the cytoplasm. The enzyme catalyses 3-phosphoshikimate + phosphoenolpyruvate = 5-O-(1-carboxyvinyl)-3-phosphoshikimate + phosphate. It functions in the pathway metabolic intermediate biosynthesis; chorismate biosynthesis; chorismate from D-erythrose 4-phosphate and phosphoenolpyruvate: step 6/7. In terms of biological role, catalyzes the transfer of the enolpyruvyl moiety of phosphoenolpyruvate (PEP) to the 5-hydroxyl of shikimate-3-phosphate (S3P) to produce enolpyruvyl shikimate-3-phosphate and inorganic phosphate. The chain is 3-phosphoshikimate 1-carboxyvinyltransferase from Escherichia coli O8 (strain IAI1).